Here is a 466-residue protein sequence, read N- to C-terminus: Ribulose bisphosphate carboxylase large chain (466 aa).

At lysine 5 the chain carries N6,N6,N6-trimethyllysine. Residues asparagine 114 and threonine 164 each coordinate substrate. The active-site Proton acceptor is lysine 166. Lysine 168 lines the substrate pocket. Mg(2+)-binding residues include lysine 192, aspartate 194, and glutamate 195. The residue at position 192 (lysine 192) is an N6-carboxylysine. Histidine 285 serves as the catalytic Proton acceptor. Positions 286, 318, and 370 each coordinate substrate.

This sequence belongs to the RuBisCO large chain family. Type I subfamily. As to quaternary structure, heterohexadecamer of 8 large chains and 8 small chains; disulfide-linked. The disulfide link is formed within the large subunit homodimers. It depends on Mg(2+) as a cofactor. The disulfide bond which can form in the large chain dimeric partners within the hexadecamer appears to be associated with oxidative stress and protein turnover.

Its subcellular location is the plastid. The protein resides in the chloroplast. It catalyses the reaction 2 (2R)-3-phosphoglycerate + 2 H(+) = D-ribulose 1,5-bisphosphate + CO2 + H2O. It carries out the reaction D-ribulose 1,5-bisphosphate + O2 = 2-phosphoglycolate + (2R)-3-phosphoglycerate + 2 H(+). RuBisCO catalyzes two reactions: the carboxylation of D-ribulose 1,5-bisphosphate, the primary event in carbon dioxide fixation, as well as the oxidative fragmentation of the pentose substrate in the photorespiration process. Both reactions occur simultaneously and in competition at the same active site. This is Ribulose bisphosphate carboxylase large chain from Asarum canadense (Wild ginger).